The following is a 482-amino-acid chain: uncharacterized protein (482 aa).

Composition is skewed to low complexity over residues 24–86 (SPNS…AQQQ) and 312–339 (TDSL…SQSI). Disordered stretches follow at residues 24–88 (SPNS…QQHY) and 307–376 (LHSQ…LIGK). Acidic residues predominate over residues 342-363 (EEEEDGGEDEEEEGGEDNDNES).

This is an uncharacterized protein from Dictyostelium discoideum (Social amoeba).